The following is a 185-amino-acid chain: Ribosome-recycling factor (185 aa).

It belongs to the RRF family.

It localises to the cytoplasm. In terms of biological role, responsible for the release of ribosomes from messenger RNA at the termination of protein biosynthesis. May increase the efficiency of translation by recycling ribosomes from one round of translation to another. This Oceanobacillus iheyensis (strain DSM 14371 / CIP 107618 / JCM 11309 / KCTC 3954 / HTE831) protein is Ribosome-recycling factor.